The chain runs to 399 residues: uncharacterized protein (399 aa).

Belongs to the TelA family.

This is an uncharacterized protein from Listeria monocytogenes serovar 1/2a (strain ATCC BAA-679 / EGD-e).